The following is a 261-amino-acid chain: Cytochrome c oxidase subunit 3 (261 aa).

Topologically, residues 1–15 (MAHQAHAYHMVDPSP) are mitochondrial matrix. A helical membrane pass occupies residues 16–34 (WPLTGAVAALLMTSGLAVW). Residues 35–40 (FHFHSM) are Mitochondrial intermembrane-facing. A helical membrane pass occupies residues 41 to 66 (YLLYLGLTLLLLTMVQWWRDIIREGT). Topologically, residues 67 to 72 (FQGHHT) are mitochondrial matrix. The chain crosses the membrane as a helical span at residues 73–105 (PPVQKGLRYGMILFITSEVFFFLGFFWAFYHSS). Residues 106 to 128 (LAPTPELGGCWPPTGIYPLDPFE) are Mitochondrial intermembrane-facing. A helical transmembrane segment spans residues 129-152 (VPLLNTAVLLASGVTVTWAHHSLM). The Mitochondrial matrix portion of the chain corresponds to 153–155 (EGN). The chain crosses the membrane as a helical span at residues 156–183 (RKEAIQALTLTVLLGFYFTALQAMEYYE). The Mitochondrial intermembrane segment spans residues 184–190 (APFTIAD). A helical membrane pass occupies residues 191–223 (GVYGSTFFVATGFHGLHVIIGSTFLMVCLLRQI). At 224 to 232 (QYHFTSEHH) the chain is on the mitochondrial matrix side. Residues 233 to 256 (FGFERAAWYWHFVDVVWLFLYVSI) form a helical membrane-spanning segment. Topologically, residues 257–261 (YWWGS) are mitochondrial intermembrane.

This sequence belongs to the cytochrome c oxidase subunit 3 family. Component of the cytochrome c oxidase (complex IV, CIV), a multisubunit enzyme composed of 14 subunits. The complex is composed of a catalytic core of 3 subunits MT-CO1, MT-CO2 and MT-CO3, encoded in the mitochondrial DNA, and 11 supernumerary subunits COX4I, COX5A, COX5B, COX6A, COX6B, COX6C, COX7A, COX7B, COX7C, COX8 and NDUFA4, which are encoded in the nuclear genome. The complex exists as a monomer or a dimer and forms supercomplexes (SCs) in the inner mitochondrial membrane with NADH-ubiquinone oxidoreductase (complex I, CI) and ubiquinol-cytochrome c oxidoreductase (cytochrome b-c1 complex, complex III, CIII), resulting in different assemblies (supercomplex SCI(1)III(2)IV(1) and megacomplex MCI(2)III(2)IV(2)).

Its subcellular location is the mitochondrion inner membrane. It catalyses the reaction 4 Fe(II)-[cytochrome c] + O2 + 8 H(+)(in) = 4 Fe(III)-[cytochrome c] + 2 H2O + 4 H(+)(out). Its function is as follows. Component of the cytochrome c oxidase, the last enzyme in the mitochondrial electron transport chain which drives oxidative phosphorylation. The respiratory chain contains 3 multisubunit complexes succinate dehydrogenase (complex II, CII), ubiquinol-cytochrome c oxidoreductase (cytochrome b-c1 complex, complex III, CIII) and cytochrome c oxidase (complex IV, CIV), that cooperate to transfer electrons derived from NADH and succinate to molecular oxygen, creating an electrochemical gradient over the inner membrane that drives transmembrane transport and the ATP synthase. Cytochrome c oxidase is the component of the respiratory chain that catalyzes the reduction of oxygen to water. Electrons originating from reduced cytochrome c in the intermembrane space (IMS) are transferred via the dinuclear copper A center (CU(A)) of subunit 2 and heme A of subunit 1 to the active site in subunit 1, a binuclear center (BNC) formed by heme A3 and copper B (CU(B)). The BNC reduces molecular oxygen to 2 water molecules using 4 electrons from cytochrome c in the IMS and 4 protons from the mitochondrial matrix. The sequence is that of Cytochrome c oxidase subunit 3 (MT-CO3) from Squalus acanthias (Spiny dogfish).